The primary structure comprises 196 residues: Large ribosomal subunit protein bL25 (196 aa).

It belongs to the bacterial ribosomal protein bL25 family. CTC subfamily. As to quaternary structure, part of the 50S ribosomal subunit; part of the 5S rRNA/L5/L18/L25 subcomplex. Contacts the 5S rRNA. Binds to the 5S rRNA independently of L5 and L18.

Functionally, this is one of the proteins that binds to the 5S RNA in the ribosome where it forms part of the central protuberance. This chain is Large ribosomal subunit protein bL25, found in Bacteroides thetaiotaomicron (strain ATCC 29148 / DSM 2079 / JCM 5827 / CCUG 10774 / NCTC 10582 / VPI-5482 / E50).